Reading from the N-terminus, the 123-residue chain is UPF0295 protein Bcer98_0460 (123 aa).

2 helical membrane-spanning segments follow: residues 12 to 32 and 43 to 63; these read IRTF…LGVF and FMML…WIGM.

It belongs to the UPF0295 family.

It localises to the cell membrane. This chain is UPF0295 protein Bcer98_0460, found in Bacillus cytotoxicus (strain DSM 22905 / CIP 110041 / 391-98 / NVH 391-98).